Consider the following 30-residue polypeptide: Conotoxin Bt12.1 (30 aa).

In terms of processing, contains 3 disulfide bonds. Expressed by the venom duct.

It localises to the secreted. This chain is Conotoxin Bt12.1, found in Conus betulinus (Beech cone).